Reading from the N-terminus, the 187-residue chain is NADH-quinone oxidoreductase subunit B (187 aa).

[4Fe-4S] cluster-binding residues include Cys-46, Cys-47, Cys-112, and Cys-141.

This sequence belongs to the complex I 20 kDa subunit family. NDH-1 is composed of 14 different subunits. Subunits NuoB, C, D, E, F, and G constitute the peripheral sector of the complex. [4Fe-4S] cluster is required as a cofactor.

The protein localises to the cell inner membrane. The catalysed reaction is a quinone + NADH + 5 H(+)(in) = a quinol + NAD(+) + 4 H(+)(out). NDH-1 shuttles electrons from NADH, via FMN and iron-sulfur (Fe-S) centers, to quinones in the respiratory chain. The immediate electron acceptor for the enzyme in this species is believed to be ubiquinone. Couples the redox reaction to proton translocation (for every two electrons transferred, four hydrogen ions are translocated across the cytoplasmic membrane), and thus conserves the redox energy in a proton gradient. The chain is NADH-quinone oxidoreductase subunit B from Myxococcus xanthus (strain DK1622).